Reading from the N-terminus, the 821-residue chain is MAANGDSPPWSPALAAEGRGSSCEVRRERTPEARIHSVKRYPDLSPGPKGRSSADHAALNSIVSLQASVSFEDVTVDFSKEEWQHLDPAQRRLYWDVTLENYSHLLSVGYQIPKSEAAFKLEQGEGPWMLEGEAPHQSCSGEAIGKMQQQGIPGGIFFHCERFDQPIGEDSLCSILEELWQDNDQLEQRQENQNNLLSHVKVLIKERGYEHKNIEKIIHVTTKLVPSIKRLHNCDTILKHTLNSHNHNRNSATKNLGKIFGNGNNFPHSPSSTKNENAKTGANSCEHDHYEKHLSHKQAPTHHQKIHPEEKLYVCTECVMGFTQKSHLFEHQRIHAGEKSRECDKSNKVFPQKPQVDVHPSVYTGEKPYLCTQCGKVFTLKSNLITHQKIHTGQKPYKCSECGKAFFQRSDLFRHLRIHTGEKPYECSECGKGFSQNSDLSIHQKTHTGEKHYECNECGKAFTRKSALRMHQRIHTGEKPYVCADCGKAFIQKSHFNTHQRIHTGEKPYECSDCGKSFTKKSQLHVHQRIHTGEKPYICTECGKVFTHRTNLTTHQKTHTGEKPYMCAECGKAFTDQSNLIKHQKTHTGEKPYKCNGCGKAFIWKSRLKIHQKSHIGERHYECKDCGKAFIQKSTLSVHQRIHTGEKPYVCPECGKAFIQKSHFIAHHRIHTGEKPYECSDCGKCFTKKSQLRVHQKIHTGEKPNICAECGKAFTDRSNLITHQKIHTREKPYECGDCGKTFTWKSRLNIHQKSHTGERHYECSKCGKAFIQKATLSMHQIIHTGKKPYACTECQKAFTDRSNLIKHQKMHSGEKRYKASD.

Positions 1–55 (MAANGDSPPWSPALAAEGRGSSCEVRRERTPEARIHSVKRYPDLSPGPKGRSSAD) are disordered. Positions 24 to 35 (EVRRERTPEARI) are enriched in basic and acidic residues. In terms of domain architecture, KRAB spans 69–140 (VSFEDVTVDF…EGEAPHQSCS (72 aa)). Lys-120 is covalently cross-linked (Glycyl lysine isopeptide (Lys-Gly) (interchain with G-Cter in SUMO2)). The segment at 313–335 (YVCTECVMGFTQKSHLFEHQRIH) adopts a C2H2-type 1 zinc-finger fold. The C2H2-type 2; degenerate zinc-finger motif lies at 341 to 364 (RECDKSNKVFPQKPQVDVHPSVYT). C2H2-type zinc fingers lie at residues 369–391 (YLCT…QKIH), 397–419 (YKCS…LRIH), 425–447 (YECS…QKTH), 453–475 (YECN…QRIH), 481–503 (YVCA…QRIH), 509–531 (YECS…QRIH), 537–559 (YICT…QKTH), 565–587 (YMCA…QKTH), 593–615 (YKCN…QKSH), and 621–643 (YECK…QRIH). A Glycyl lysine isopeptide (Lys-Gly) (interchain with G-Cter in SUMO2) cross-link involves residue Lys-647. 6 consecutive C2H2-type zinc fingers follow at residues 649 to 671 (YVCP…HRIH), 677 to 699 (YECS…QKIH), 705 to 727 (NICA…QKIH), 733 to 755 (YECG…QKSH), 761 to 783 (YECS…QIIH), and 789 to 811 (YACT…QKMH).

Belongs to the krueppel C2H2-type zinc-finger protein family. In terms of tissue distribution, expressed in the heart, brain, placenta, lung, liver, skeletal muscle, kidney and pancreas.

The protein localises to the nucleus. In terms of biological role, may be involved in transcriptional regulation. This is Zinc finger protein 41 (ZNF41) from Homo sapiens (Human).